Consider the following 540-residue polypeptide: Glucose-6-phosphate isomerase (540 aa).

The active-site Proton donor is Glu-350. Catalysis depends on residues His-381 and Lys-503.

It belongs to the GPI family.

The protein resides in the cytoplasm. The catalysed reaction is alpha-D-glucose 6-phosphate = beta-D-fructose 6-phosphate. Its pathway is carbohydrate biosynthesis; gluconeogenesis. It functions in the pathway carbohydrate degradation; glycolysis; D-glyceraldehyde 3-phosphate and glycerone phosphate from D-glucose: step 2/4. Functionally, catalyzes the reversible isomerization of glucose-6-phosphate to fructose-6-phosphate. The chain is Glucose-6-phosphate isomerase from Burkholderia pseudomallei (strain 1710b).